The primary structure comprises 129 residues: Protein BEX2 (129 aa).

The disordered stretch occupies residues 1-37 (MESKVEQGVKNLNMENDHQEKEEKEEKPQDASKRDPI). Residues 15–36 (ENDHQEKEEKEEKPQDASKRDP) are compositionally biased toward basic and acidic residues. Arg-51 is modified (omega-N-methylarginine). The segment at 118-122 (HHDHH) is his cluster. Residue Cys-126 coordinates Zn(2+).

This sequence belongs to the BEX family. Interacts with LMO2, possibly leading to regulate the transcriptional activity of a DNA-binding complex containing LMO2. Interacts with OMP. In terms of tissue distribution, primarily localized to neuronal cells within several regions of the brain, including the olfactory epithelium, bulb, peri/paraventricular nuclei, suprachiasmatic nucleus, arcuate nucleus, median eminence, lateral hypothalamic area, thalamus, hippocampus and cerebellum (at protein level).

The protein localises to the cytoplasm. Its subcellular location is the nucleus. Functionally, regulator of mitochondrial apoptosis and G1 cell cycle. Regulates the level of PP2A regulatory subunit B and PP2A phosphatase activity. In absence of reductive stress, acts as a pseudosubstrate for the CRL2(FEM1B) complex: associates with FEM1B via zinc, thereby preventing association between FEM1B and its substrates. The protein is Protein BEX2 of Mus musculus (Mouse).